The primary structure comprises 158 residues: Secreted frizzled-related protein 1 (158 aa).

In terms of domain architecture, FZ spans 1 to 34 (VRDSCEPVMQFFGFYWPEMLKCDKFPEGDVCIAM). N-linked (GlcNAc...) asparagine glycosylation occurs at Asn38. Disulfide bonds link Cys51-Cys121 and Cys68-Cys123. In terms of domain architecture, NTR spans 51–158 (CPPCDNELKS…IHKWDKKNKE (108 aa)).

This sequence belongs to the secreted frizzled-related protein (sFRP) family. In terms of assembly, interacts with WNT4, WNT1, WNT2, WNT8, MYOC and FRZD6.

The protein localises to the secreted. In terms of biological role, soluble frizzled-related proteins (sFRPS) function as modulators of Wnt signaling through direct interaction with Wnts. They have a role in regulating cell growth and differentiation in specific cell types. SFRP1 decreases intracellular beta-catenin levels. Has antiproliferative effects on vascular cells, in vitro and in vivo, and can induce, in vivo, an angiogenic response. In vascular cell cycle, delays the G1 phase and entry into the S phase. In kidney development, inhibits tubule formation and bud growth in metanephroi. Inhibits WNT1/WNT4-mediated TCF-dependent transcription. In Rattus norvegicus (Rat), this protein is Secreted frizzled-related protein 1 (Sfrp1).